Here is a 153-residue protein sequence, read N- to C-terminus: Small ribosomal subunit protein uS9 (153 aa).

The disordered stretch occupies residues 122-153 (KKAGFLTRDPRSTERKKYGLKKARKAPQYSKR). Residues 129–138 (RDPRSTERKK) show a composition bias toward basic and acidic residues. The span at 139-153 (YGLKKARKAPQYSKR) shows a compositional bias: basic residues.

It belongs to the universal ribosomal protein uS9 family.

The polypeptide is Small ribosomal subunit protein uS9 (rpsI) (Mycobacterium leprae (strain TN)).